Here is a 342-residue protein sequence, read N- to C-terminus: Phenylalanine--tRNA ligase alpha subunit (342 aa).

Glu257 serves as a coordination point for Mg(2+).

This sequence belongs to the class-II aminoacyl-tRNA synthetase family. Phe-tRNA synthetase alpha subunit type 1 subfamily. Tetramer of two alpha and two beta subunits. The cofactor is Mg(2+).

The protein localises to the cytoplasm. It catalyses the reaction tRNA(Phe) + L-phenylalanine + ATP = L-phenylalanyl-tRNA(Phe) + AMP + diphosphate + H(+). In Legionella pneumophila subsp. pneumophila (strain Philadelphia 1 / ATCC 33152 / DSM 7513), this protein is Phenylalanine--tRNA ligase alpha subunit.